The chain runs to 1481 residues: Cystic fibrosis transmembrane conductance regulator (1481 aa).

At 1–77 the chain is on the cytoplasmic side; it reads MQRSPLEKAS…KLINALRRCF (77 aa). Residues 78–98 form a helical membrane-spanning segment; sequence FWRFMFYGIILYLGEVTKAVQ. The ABC transmembrane type-1 1 domain occupies 81–365; the sequence is FMFYGIILYL…WAVQTWYDSL (285 aa). Residues 99–122 are Extracellular-facing; it reads PLLLGRIIASYDPDNKVERSIAIY. Residues 123-146 form a helical membrane-spanning segment; the sequence is LGIGLCLLFIVRTLLLHPAIFGLH. The Cytoplasmic portion of the chain corresponds to 147-195; the sequence is HIGMQMRIAMFSLIYKKTLKLSSRVLDKISIGQLVSLLSNNLNKFDEGL. The chain crosses the membrane as a helical span at residues 196-216; that stretch reads ALAHFVWIAPLQVTLLMGLLW. Over 217 to 222 the chain is Extracellular; sequence DLLQAF. A helical membrane pass occupies residues 223–243; that stretch reads TFCGLAFLVVLALLQAGLGKM. Residues 244–298 lie on the Cytoplasmic side of the membrane; the sequence is MMKYRDQRAGKINERLVITSEMIENIQSVKAYCWEEAMEKIIENLRQTELKLTRK. A helical membrane pass occupies residues 299–319; sequence AAYVRYLNSSAFFFSGFFVVF. The Extracellular portion of the chain corresponds to 320-339; the sequence is LSVLPYALLKGIILRKIFTT. Residues 340–358 traverse the membrane as a helical segment; sequence ISFCIVLRMAVTRQFPWAV. Residues 359 to 858 lie on the Cytoplasmic side of the membrane; that stretch reads QTWYDSLGAI…YLRYITVHKS (500 aa). ATP-binding positions include W401, 457-464, and Q492; that span reads GSTGAGKT. Positions 421 to 645 constitute an ABC transporter 1 domain; the sequence is ISNCDTSLFF…RPDFSSKLMG (225 aa). The S-palmitoyl cysteine moiety is linked to residue C523. Phosphoserine is present on residues S548 and S659. The interval 653 to 831 is disordered R region; the sequence is TAERRNSIIT…EEINEEDLRD (179 aa). S669 is modified (phosphoserine; by PKA). A Phosphoserine modification is found at S685. Residue K687 forms a Glycyl lysine isopeptide (Lys-Gly) (interchain with G-Cter in ubiquitin) linkage. Phosphoserine occurs at positions 699 and 711. At T716 the chain carries Phosphothreonine. Phosphoserine occurs at positions 736, 767, 790, 795, and 813. A helical transmembrane segment spans residues 859–879; the sequence is LMFVLIWCLVVFLVEVAASLV. The ABC transmembrane type-1 2 domain occupies 859–1155; that stretch reads LMFVLIWCLV…AVNSSIDVDS (297 aa). Residues 880–918 are Extracellular-facing; the sequence is VLCLFPKILLQDKGNSTKNASNSYAVIITSTSSYYIFYI. N-linked (GlcNAc...) asparagine glycosylation is found at N894 and N898. A discontinuously helical membrane pass occupies residues 919 to 939; sequence YVGVADTLLALGLFRGLPLVH. Residues 940 to 990 are Cytoplasmic-facing; that stretch reads TLITVSKTLHHKMLQSVLQAPMSTLNTLKTGGILNRFSKDIAVLDDLLPLT. The helical transmembrane segment at 991 to 1011 threads the bilayer; the sequence is IFDFIQLLLIVIGAVVVVSVL. The Extracellular portion of the chain corresponds to 1012-1013; that stretch reads QP. A helical membrane pass occupies residues 1014 to 1034; that stretch reads YIFLATVPVIAAFILLRGYFL. Topologically, residues 1035–1095 are cytoplasmic; that stretch reads HTSQQLKQLE…TANWFLYLST (61 aa). A helical membrane pass occupies residues 1096–1116; the sequence is LRWFQMRIEMIFVIFFIAVTF. Over 1117-1130 the chain is Extracellular; sequence ISILTTGEGEGRVG. The helical transmembrane segment at 1131-1151 threads the bilayer; the sequence is IILTLAMNIMGTLQWAVNSSI. The Cytoplasmic portion of the chain corresponds to 1152-1481; that stretch reads DVDSLMRSVS…TEEEVQETKL (330 aa). The ABC transporter 2 domain occupies 1211 to 1444; the sequence is MTVKDLTAKY…KSLFRQAISP (234 aa). Residues Y1220 and 1245 to 1252 contribute to the ATP site; that span reads GRTGSGKS. Positions 1387–1481 are interaction with GORASP2; that stretch reads RTLKQAFADC…TEEEVQETKL (95 aa). C1396 is lipidated: S-palmitoyl cysteine. S1457 is modified (phosphoserine). Residues 1479-1481 carry the PDZ-binding motif; sequence TKL.

This sequence belongs to the ABC transporter superfamily. ABCC family. CFTR transporter (TC 3.A.1.202) subfamily. As to quaternary structure, monomer; does not require oligomerization for channel activity. May form oligomers in the membrane. Interacts with SLC26A3, SLC26A6 and NHERF1. Interacts with SHANK2. Interacts with MYO6. Interacts (via C-terminus) with GOPC (via PDZ domain); this promotes CFTR internalization and thereby decreases channel activity. Interacts with SLC4A7 through NHERF1. Found in a complex with MYO5B and RAB11A. Interacts with ANO1. Interacts with SLC26A8. Interacts with AHCYL1; the interaction increases CFTR activity. Interacts with CSE1L. The core-glycosylated form interacts with GORASP2 (via PDZ GRASP-type 1 domain) in respone to ER stress. Interacts with MARCHF2; the interaction leads to CFTR ubiqtuitination and degradation. Interacts with ADGRG2. N-glycosylated. Post-translationally, phosphorylated; cAMP treatment promotes phosphorylation and activates the channel. Dephosphorylation decreases the ATPase activity (in vitro). Phosphorylation at PKA sites activates the channel. Phosphorylation at PKC sites enhances the response to phosphorylation by PKA. Phosphorylated by AMPK; this inhibits channel activity. In terms of processing, ubiquitinated, leading to its degradation in the lysosome. Deubiquitination by USP10 in early endosomes enhances its endocytic recycling to the cell membrane. Ubiquitinated by RNF185 during ER stress. Ubiquitinated by MARCHF2.

The protein resides in the apical cell membrane. It is found in the early endosome membrane. It localises to the cell membrane. The protein localises to the recycling endosome membrane. Its subcellular location is the endoplasmic reticulum membrane. The protein resides in the nucleus. The catalysed reaction is ATP + H2O + closed Cl(-) channel = ADP + phosphate + open Cl(-) channel.. The enzyme catalyses chloride(in) = chloride(out). It catalyses the reaction hydrogencarbonate(in) = hydrogencarbonate(out). It carries out the reaction ATP + H2O = ADP + phosphate + H(+). Functionally, epithelial ion channel that plays an important role in the regulation of epithelial ion and water transport and fluid homeostasis. Mediates the transport of chloride ions across the cell membrane. Possesses an intrinsic ATPase activity and utilizes ATP to gate its channel; the passive flow of anions through the channel is gated by cycles of ATP binding and hydrolysis by the ATP-binding domains. The ion channel is also permeable to HCO(3)(-); selectivity depends on the extracellular chloride concentration. Exerts its function also by modulating the activity of other ion channels and transporters. Contributes to the regulation of the pH and the ion content of the epithelial fluid layer. Modulates the activity of the epithelial sodium channel (ENaC) complex, in part by regulating the cell surface expression of the ENaC complex. May regulate bicarbonate secretion and salvage in epithelial cells by regulating the transporter SLC4A7. Can inhibit the chloride channel activity of ANO1. Plays a role in the chloride and bicarbonate homeostasis during sperm epididymal maturation and capacitation. The chain is Cystic fibrosis transmembrane conductance regulator from Ovis aries (Sheep).